The chain runs to 121 residues: Large ribosomal subunit protein uL14 (121 aa).

It belongs to the universal ribosomal protein uL14 family. As to quaternary structure, part of the 50S ribosomal subunit. Forms a cluster with proteins L3 and L19. In the 70S ribosome, L14 and L19 interact and together make contacts with the 16S rRNA in bridges B5 and B8.

Binds to 23S rRNA. Forms part of two intersubunit bridges in the 70S ribosome. The sequence is that of Large ribosomal subunit protein uL14 from Legionella pneumophila (strain Paris).